Here is a 549-residue protein sequence, read N- to C-terminus: Glucose-6-phosphate isomerase (549 aa).

An N6-acetyllysine mark is found at Lys80, Lys228, and Lys234. Glu355 (proton donor) is an active-site residue. Catalysis depends on residues His386 and Lys514.

The protein belongs to the GPI family.

The protein localises to the cytoplasm. The enzyme catalyses alpha-D-glucose 6-phosphate = beta-D-fructose 6-phosphate. The protein operates within carbohydrate biosynthesis; gluconeogenesis. It participates in carbohydrate degradation; glycolysis; D-glyceraldehyde 3-phosphate and glycerone phosphate from D-glucose: step 2/4. Catalyzes the reversible isomerization of glucose-6-phosphate to fructose-6-phosphate. In Shigella flexneri, this protein is Glucose-6-phosphate isomerase.